The sequence spans 362 residues: 4-hydroxythreonine-4-phosphate dehydrogenase (362 aa).

Substrate is bound at residue T149. Residues H184, H229, and H295 each contribute to the a divalent metal cation site. K303, N312, and R321 together coordinate substrate.

This sequence belongs to the PdxA family. As to quaternary structure, homodimer. It depends on a divalent metal cation as a cofactor.

It localises to the cytoplasm. The catalysed reaction is 4-(phosphooxy)-L-threonine + NAD(+) = 3-amino-2-oxopropyl phosphate + CO2 + NADH. It functions in the pathway cofactor biosynthesis; pyridoxine 5'-phosphate biosynthesis; pyridoxine 5'-phosphate from D-erythrose 4-phosphate: step 4/5. Functionally, catalyzes the NAD(P)-dependent oxidation of 4-(phosphooxy)-L-threonine (HTP) into 2-amino-3-oxo-4-(phosphooxy)butyric acid which spontaneously decarboxylates to form 3-amino-2-oxopropyl phosphate (AHAP). The polypeptide is 4-hydroxythreonine-4-phosphate dehydrogenase (Nostoc sp. (strain PCC 7120 / SAG 25.82 / UTEX 2576)).